The primary structure comprises 277 residues: Bis(5'-nucleosyl)-tetraphosphatase, symmetrical (277 aa).

This sequence belongs to the Ap4A hydrolase family.

The enzyme catalyses P(1),P(4)-bis(5'-adenosyl) tetraphosphate + H2O = 2 ADP + 2 H(+). Functionally, hydrolyzes diadenosine 5',5'''-P1,P4-tetraphosphate to yield ADP. The polypeptide is Bis(5'-nucleosyl)-tetraphosphatase, symmetrical (Chromobacterium violaceum (strain ATCC 12472 / DSM 30191 / JCM 1249 / CCUG 213 / NBRC 12614 / NCIMB 9131 / NCTC 9757 / MK)).